A 468-amino-acid chain; its full sequence is Interleukin-6 receptor subunit alpha (468 aa).

The N-terminal stretch at 1–19 (MLAVGCALLAALLAAPGAA) is a signal peptide. Residues 20–365 (LAPRRCPAQE…VQDSSSVPLP (346 aa)) lie on the Extracellular side of the membrane. 4 disulfide bridges follow: cysteine 25/cysteine 193, cysteine 47/cysteine 96, cysteine 121/cysteine 132, and cysteine 165/cysteine 176. In terms of domain architecture, Ig-like C2-type spans 26 to 112 (PAQEVARGVL…AGTVHLLVDV (87 aa)). Asparagine 55 and asparagine 93 each carry an N-linked (GlcNAc...) asparagine glycan. 2 consecutive Fibronectin type-III domains span residues 113 to 217 (PPEE…LQPD) and 218 to 316 (PPAN…TPWT). 2 N-linked (GlcNAc...) asparagine glycosylation sites follow: asparagine 221 and asparagine 245. The short motif at 303–307 (WSEWS) is the WSXWS motif element. The interval 303–328 (WSEWSPEAMGTPWTESRSPPAENEVS) is disordered. N-linked (GlcNAc...) asparagine glycosylation is present at asparagine 350. Threonine 352 carries O-linked (GlcNAc) threonine glycosylation. A helical membrane pass occupies residues 366–386 (TFLVAGGSLAFGTLLCIAIVL). Topologically, residues 387–468 (RFKKTWKLRA…ISNTDYFFPR (82 aa)) are cytoplasmic. The segment covering 421–433 (TPVLVPLISPPVS) has biased composition (pro residues). A disordered region spans residues 421 to 468 (TPVLVPLISPPVSPSSLGSDNTSSHNRPDARDPRSPYDISNTDYFFPR). Residues 446-455 (NRPDARDPRS) show a composition bias toward basic and acidic residues. The segment covering 458–468 (DISNTDYFFPR) has biased composition (polar residues).

This sequence belongs to the type I cytokine receptor family. Type 3 subfamily. As to quaternary structure, component of a hexamer of two molecules each of IL6, IL6R and IL6ST; first binds to IL6 to associate with the signaling subunit IL6ST. Interacts (via N-terminal ectodomain) with SORL1; this interaction may affect IL6-binding to IL6R, hence decrease IL6 'classic-signaling'. Also interacts with SORL1; this interaction leads to soluble IL6R internalization. May form a trimeric complex with the soluble SORL1 ectodomain and circulating IL6 receptor; this interaction might stabilize circulating IL6, hence promote IL6 'trans-signaling,. In terms of processing, a short soluble form is released from the membrane by proteolysis. The sIL6R is formed mostly by limited proteolysis of membrane-bound receptors, a process referred to as ectodomain shedding, but is also directly secreted from the cells after alternative mRNA splicing. mIL6R is cleaved by the proteases ADAM10 and ADAM17. Glycosylated. Glycosylation is dispensable for transport, signaling, and cell-surface turnover. Glycosylation at Asn-55 is a protease-regulatory exosite. Glycosylation is required for ADAM17-mediated proteolysis. In terms of tissue distribution, expressed in peripheral blood mononuclear cells and weakly found in urine and serum. 1%-20% of the total sIL6R in plasma is generated by alternative splicing.

It localises to the cell membrane. The protein resides in the secreted. Its activity is regulated as follows. Classic and trans-signaling are both inhibited by tocilizumab, a humanized monoclonal antibody that blocks interleukin IL6R signaling. Functionally, part of the receptor for interleukin 6. Binds to IL6 with low affinity, but does not transduce a signal. Signal activation necessitate an association with IL6ST. Activation leads to the regulation of the immune response, acute-phase reactions and hematopoiesis. The interaction with membrane-bound IL6R and IL6ST stimulates 'classic signaling', the restricted expression of the IL6R limits classic IL6 signaling to only a few tissues such as the liver and some cells of the immune system. Whereas the binding of IL6 and soluble IL6R to IL6ST stimulates 'trans-signaling'. Alternatively, 'cluster signaling' occurs when membrane-bound IL6:IL6R complexes on transmitter cells activate IL6ST receptors on neighboring receiver cells. Its function is as follows. Signaling via the membrane-bound IL6R is mostly regenerative and anti-inflammatory. Drives naive CD4(+) T cells to the Th17 lineage, through 'cluster signaling' by dendritic cells. In terms of biological role, soluble form of IL6 receptor (sIL6R) that acts as an agonist of IL6 activity. The IL6:sIL6R complex (hyper-IL6) binds to IL6ST/gp130 on cell surfaces and induces signaling also on cells that do not express membrane-bound IL6R in a process called IL6 'trans-signaling'. sIL6R is causative for the pro-inflammatory properties of IL6 and an important player in the development of chronic inflammatory diseases. In complex with IL6, is required for induction of VEGF production. Plays a protective role during liver injury, being required for maintenance of tissue regeneration. 'Trans-signaling' in central nervous system regulates energy and glucose homeostasis. The sequence is that of Interleukin-6 receptor subunit alpha from Homo sapiens (Human).